A 615-amino-acid polypeptide reads, in one-letter code: DNA mismatch repair protein MutL (615 aa).

A disordered region spans residues F363–Y397. The segment covering A364 to P391 has biased composition (low complexity).

It belongs to the DNA mismatch repair MutL/HexB family.

Functionally, this protein is involved in the repair of mismatches in DNA. It is required for dam-dependent methyl-directed DNA mismatch repair. May act as a 'molecular matchmaker', a protein that promotes the formation of a stable complex between two or more DNA-binding proteins in an ATP-dependent manner without itself being part of a final effector complex. The sequence is that of DNA mismatch repair protein MutL from Escherichia coli (strain ATCC 8739 / DSM 1576 / NBRC 3972 / NCIMB 8545 / WDCM 00012 / Crooks).